Consider the following 435-residue polypeptide: 5-hydroxybenzimidazole synthase (435 aa).

Substrate contacts are provided by residues Met-95, Tyr-124, His-163, 186–188 (SKG), 227–230 (NGLR), and Glu-266. His-270 provides a ligand contact to Zn(2+). Tyr-293 provides a ligand contact to substrate. His-334 provides a ligand contact to Zn(2+). The [4Fe-4S] cluster site is built by Cys-410, Cys-413, and Cys-417.

It belongs to the ThiC family. 5-hydroxybenzimidazole synthase subfamily. As to quaternary structure, homodimer. The cofactor is [4Fe-4S] cluster.

The catalysed reaction is 5-amino-1-(5-phospho-beta-D-ribosyl)imidazole + AH2 + S-adenosyl-L-methionine = 5-hydroxybenzimidazole + 5'-deoxyadenosine + formate + L-methionine + A + NH4(+) + phosphate + 2 H(+). Functionally, catalyzes the conversion of aminoimidazole ribotide (AIR) to 5-hydroxybenzimidazole (5-HBI) in a radical S-adenosyl-L-methionine (SAM)-dependent reaction. Is thus involved in the anaerobic biosynthesis of the benzimidazole lower axial ligand of the cobamide produced by G.sulfurreducens. This is 5-hydroxybenzimidazole synthase from Geobacter sulfurreducens (strain ATCC 51573 / DSM 12127 / PCA).